A 359-amino-acid chain; its full sequence is Probable dual-specificity RNA methyltransferase RlmN (359 aa).

Glu-99 (proton acceptor) is an active-site residue. Positions 105-342 (TENRRTACVS…VTIRKSYGTT (238 aa)) constitute a Radical SAM core domain. Cys-112 and Cys-347 are disulfide-bonded. [4Fe-4S] cluster contacts are provided by Cys-119, Cys-123, and Cys-126. S-adenosyl-L-methionine-binding positions include 171 to 172 (GE), Ser-204, 227 to 229 (SLH), and Asn-304. The active-site S-methylcysteine intermediate is the Cys-347.

Belongs to the radical SAM superfamily. RlmN family. It depends on [4Fe-4S] cluster as a cofactor.

Its subcellular location is the cytoplasm. It carries out the reaction adenosine(2503) in 23S rRNA + 2 reduced [2Fe-2S]-[ferredoxin] + 2 S-adenosyl-L-methionine = 2-methyladenosine(2503) in 23S rRNA + 5'-deoxyadenosine + L-methionine + 2 oxidized [2Fe-2S]-[ferredoxin] + S-adenosyl-L-homocysteine. It catalyses the reaction adenosine(37) in tRNA + 2 reduced [2Fe-2S]-[ferredoxin] + 2 S-adenosyl-L-methionine = 2-methyladenosine(37) in tRNA + 5'-deoxyadenosine + L-methionine + 2 oxidized [2Fe-2S]-[ferredoxin] + S-adenosyl-L-homocysteine. Specifically methylates position 2 of adenine 2503 in 23S rRNA and position 2 of adenine 37 in tRNAs. This Pelodictyon phaeoclathratiforme (strain DSM 5477 / BU-1) protein is Probable dual-specificity RNA methyltransferase RlmN.